A 131-amino-acid chain; its full sequence is Large ribosomal subunit protein bL17 (131 aa).

It belongs to the bacterial ribosomal protein bL17 family. In terms of assembly, part of the 50S ribosomal subunit. Contacts protein L32.

The sequence is that of Large ribosomal subunit protein bL17 from Bordetella parapertussis (strain 12822 / ATCC BAA-587 / NCTC 13253).